Consider the following 700-residue polypeptide: Mitogen-activated protein kinase 9 (700 aa).

Positions 107 to 398 constitute a Protein kinase domain; the sequence is YRIQEVIGKG…AEEALTDPYF (292 aa). ATP contacts are provided by residues 113–121 and lysine 136; that span reads IGKGSYGVV. Aspartate 233 (proton acceptor) is an active-site residue. Threonine 269 carries the post-translational modification Phosphothreonine. The TXY signature appears at 269 to 271; the sequence is TDY. The residue at position 271 (tyrosine 271) is a Phosphotyrosine. A disordered region spans residues 475 to 523; sequence EESNGSGSAIPMERKHASLPRSTTVHSTPIPPKEQPLAASLKSSRPVSD.

It belongs to the protein kinase superfamily. CMGC Ser/Thr protein kinase family. MAP kinase subfamily. In terms of processing, dually phosphorylated on Thr-269 and Tyr-271, which activates the enzyme.

It carries out the reaction L-seryl-[protein] + ATP = O-phospho-L-seryl-[protein] + ADP + H(+). The catalysed reaction is L-threonyl-[protein] + ATP = O-phospho-L-threonyl-[protein] + ADP + H(+). With respect to regulation, activated by threonine and tyrosine phosphorylation. In Oryza sativa subsp. japonica (Rice), this protein is Mitogen-activated protein kinase 9 (MPK9).